Here is a 260-residue protein sequence, read N- to C-terminus: Global transcriptional regulator CodY (260 aa).

The GAF domain stretch occupies residues 1–159 (MPNLLEKTRK…SSTVVGIQLL (159 aa)). The H-T-H motif DNA-binding region spans 207 to 226 (ASVIADRIGITRSVIVNALR).

Belongs to the CodY family.

The protein resides in the cytoplasm. In terms of biological role, DNA-binding global transcriptional regulator which is involved in the adaptive response to starvation and acts by directly or indirectly controlling the expression of numerous genes in response to nutrient availability. During rapid exponential growth, CodY is highly active and represses genes whose products allow adaptation to nutrient depletion. The sequence is that of Global transcriptional regulator CodY from Streptococcus uberis (strain ATCC BAA-854 / 0140J).